A 216-amino-acid chain; its full sequence is Ribonuclease HII (216 aa).

The 184-residue stretch at 33 to 216 (WPVAGADEAG…RMSFRPFRQL (184 aa)) folds into the RNase H type-2 domain. A divalent metal cation contacts are provided by Asp39, Glu40, and Asp130.

It belongs to the RNase HII family. The cofactor is Mn(2+). It depends on Mg(2+) as a cofactor.

It is found in the cytoplasm. The catalysed reaction is Endonucleolytic cleavage to 5'-phosphomonoester.. Endonuclease that specifically degrades the RNA of RNA-DNA hybrids. The protein is Ribonuclease HII of Sinorhizobium medicae (strain WSM419) (Ensifer medicae).